The sequence spans 779 residues: Acyl-CoA dehydrogenase family member 11 (779 aa).

N6-acetyllysine is present on residues K163, K166, and K175. Position 210 is a phosphoserine (S210). Y323 bears the Phosphotyrosine mark. K368 and K390 each carry N6-succinyllysine. FAD-binding positions include 503–513 (FCMTEPNVSSS), 511–513 (SSS), 537–539 (WSS), and S539. S513 is a binding site for substrate. Residue 628-631 (GPGR) coordinates substrate. FAD is bound by residues R656, Q726, and 726–730 (QVHGG). Residue G754 participates in substrate binding. Residues 755–757 (PDE) and E757 contribute to the FAD site. K765 carries the N6-acetyllysine modification.

This sequence belongs to the acyl-CoA dehydrogenase family. Homodimer. FAD serves as cofactor.

The protein localises to the peroxisome. Its subcellular location is the mitochondrion membrane. The catalysed reaction is a 2,3-saturated acyl-CoA + oxidized [electron-transfer flavoprotein] + H(+) = a (2E)-enoyl-CoA + reduced [electron-transfer flavoprotein]. It catalyses the reaction docosanoyl-CoA + oxidized [electron-transfer flavoprotein] + H(+) = (2E)-docosenoyl-CoA + reduced [electron-transfer flavoprotein]. The enzyme catalyses tetracosanoyl-CoA + oxidized [electron-transfer flavoprotein] + H(+) = (2E)-tetracosenoyl-CoA + reduced [electron-transfer flavoprotein]. It carries out the reaction eicosanoyl-CoA + oxidized [electron-transfer flavoprotein] + H(+) = (2E)-eicosenoyl-CoA + reduced [electron-transfer flavoprotein]. The catalysed reaction is hexacosanoyl-CoA + oxidized [electron-transfer flavoprotein] + H(+) = (2E)-hexacosenoyl-CoA + reduced [electron-transfer flavoprotein]. It catalyses the reaction tricosanoyl-CoA + oxidized [electron-transfer flavoprotein] + H(+) = (2E)-tricosenoyl-CoA + reduced [electron-transfer flavoprotein]. The protein operates within lipid metabolism; fatty acid beta-oxidation. In terms of biological role, acyl-CoA dehydrogenase, that exhibits maximal activity towards saturated C22-CoA. Probably participates in beta-oxydation and energy production but could also play a role in the metabolism of specific fatty acids to control fatty acids composition of cellular lipids in brain. This chain is Acyl-CoA dehydrogenase family member 11 (Acad11), found in Mus musculus (Mouse).